A 434-amino-acid polypeptide reads, in one-letter code: 3-phosphoshikimate 1-carboxyvinyltransferase (434 aa).

3-phosphoshikimate contacts are provided by lysine 22, serine 23, and arginine 27. Position 22 (lysine 22) interacts with phosphoenolpyruvate. 2 residues coordinate phosphoenolpyruvate: glycine 93 and arginine 121. Residues serine 168, serine 169, glutamine 170, serine 199, aspartate 320, and lysine 347 each coordinate 3-phosphoshikimate. Glutamine 170 is a binding site for phosphoenolpyruvate. Aspartate 320 acts as the Proton acceptor in catalysis. The phosphoenolpyruvate site is built by arginine 351, arginine 394, and lysine 419.

It belongs to the EPSP synthase family. In terms of assembly, monomer.

The protein localises to the cytoplasm. The enzyme catalyses 3-phosphoshikimate + phosphoenolpyruvate = 5-O-(1-carboxyvinyl)-3-phosphoshikimate + phosphate. It participates in metabolic intermediate biosynthesis; chorismate biosynthesis; chorismate from D-erythrose 4-phosphate and phosphoenolpyruvate: step 6/7. Functionally, catalyzes the transfer of the enolpyruvyl moiety of phosphoenolpyruvate (PEP) to the 5-hydroxyl of shikimate-3-phosphate (S3P) to produce enolpyruvyl shikimate-3-phosphate and inorganic phosphate. The sequence is that of 3-phosphoshikimate 1-carboxyvinyltransferase from Burkholderia orbicola (strain AU 1054).